A 447-amino-acid polypeptide reads, in one-letter code: Phosphoglucosamine mutase (447 aa).

Catalysis depends on Ser100, which acts as the Phosphoserine intermediate. Residues Ser100, Asp240, Asp242, and Asp244 each contribute to the Mg(2+) site. Ser100 carries the phosphoserine modification.

Belongs to the phosphohexose mutase family. It depends on Mg(2+) as a cofactor. In terms of processing, activated by phosphorylation.

The enzyme catalyses alpha-D-glucosamine 1-phosphate = D-glucosamine 6-phosphate. Its function is as follows. Catalyzes the conversion of glucosamine-6-phosphate to glucosamine-1-phosphate. In Anoxybacillus flavithermus (strain DSM 21510 / WK1), this protein is Phosphoglucosamine mutase.